We begin with the raw amino-acid sequence, 401 residues long: Chromate transport protein (401 aa).

The next 12 helical transmembrane spans lie at 26–46, 67–87, 93–113, 124–144, 172–192, 214–234, 237–257, 272–294, 299–321, 330–350, 356–376, and 379–399; these read LVMY…ALAG, GLAL…IYLG, IVGA…MVLA, LTWM…IIAI, VITE…VWFW, AASG…GVFF, AGAF…GGVV, VAVA…YLVA, ACVA…APYF, ILAF…GAVI, SIVD…LLKF, and LSEP…YPLL.

The protein belongs to the chromate ion transporter (CHR) (TC 2.A.51) family.

The protein resides in the cell inner membrane. This protein reduces chromate accumulation and is essential for chromate resistance. This is Chromate transport protein from Cupriavidus metallidurans (strain ATCC 43123 / DSM 2839 / NBRC 102507 / CH34) (Ralstonia metallidurans).